The primary structure comprises 315 residues: Tyrosine recombinase XerC (315 aa).

The 92-residue stretch at Ala13–Glu104 folds into the Core-binding (CB) domain. Positions Ser125–Asp309 constitute a Tyr recombinase domain. Residues Arg168, Lys193, His261, Arg264, and His287 contribute to the active site. Catalysis depends on Tyr296, which acts as the O-(3'-phospho-DNA)-tyrosine intermediate.

It belongs to the 'phage' integrase family. XerC subfamily. As to quaternary structure, forms a cyclic heterotetrameric complex composed of two molecules of XerC and two molecules of XerD.

The protein resides in the cytoplasm. In terms of biological role, site-specific tyrosine recombinase, which acts by catalyzing the cutting and rejoining of the recombining DNA molecules. The XerC-XerD complex is essential to convert dimers of the bacterial chromosome into monomers to permit their segregation at cell division. It also contributes to the segregational stability of plasmids. The protein is Tyrosine recombinase XerC of Brucella suis biovar 1 (strain 1330).